Consider the following 69-residue polypeptide: MFTLKKTLLLLYFLGTISISLCKQERDADEDDGRKMTEEEVKRSIITMTKEAKLPQSWKQIACRLYNTC.

Residues 1-22 form the signal peptide; it reads MFTLKKTLLLLYFLGTISISLC. The propeptide occupies 23–43; the sequence is KQERDADEDDGRKMTEEEVKR. C63 and C69 are joined by a disulfide.

In terms of tissue distribution, expressed by the skin glands.

It is found in the secreted. Its function is as follows. Antimicrobial peptide. Has activity against the Gram-positive bacterium S.aureus ATCC2592 (MIC=15 ug/ml), the Gram-negative bacteria E.coli ATCC25922 (MIC=60 ug/ml), B.dysenteriae (MIC=60 ug/ml), H.pylori NTCT11637 (MIC=30 ug/ml), and the fungus C.albicans ATCC2002 (MIC=30 ug/ml). Has little hemolytic activity on rabbit red blood cells. The protein is Pleurain-A2 of Nidirana pleuraden (Yunnan pond frog).